The following is a 294-amino-acid chain: N-acetylmuramic acid 6-phosphate etherase (294 aa).

The region spanning 54-217 (VIKSFEEEGR…STASMIGVGK (164 aa)) is the SIS domain. Glu-82 acts as the Proton donor in catalysis. Glu-113 is an active-site residue.

This sequence belongs to the GCKR-like family. MurNAc-6-P etherase subfamily. As to quaternary structure, homodimer.

It catalyses the reaction N-acetyl-D-muramate 6-phosphate + H2O = N-acetyl-D-glucosamine 6-phosphate + (R)-lactate. It participates in amino-sugar metabolism; N-acetylmuramate degradation. In terms of biological role, specifically catalyzes the cleavage of the D-lactyl ether substituent of MurNAc 6-phosphate, producing GlcNAc 6-phosphate and D-lactate. This Bacillus cereus (strain ATCC 14579 / DSM 31 / CCUG 7414 / JCM 2152 / NBRC 15305 / NCIMB 9373 / NCTC 2599 / NRRL B-3711) protein is N-acetylmuramic acid 6-phosphate etherase.